We begin with the raw amino-acid sequence, 489 residues long: Major aspartyl peptidase 1 (489 aa).

Positions 1 to 16 (MHYLAVALPLLTLALA) are cleaved as a signal peptide. A Peptidase A1 domain is found at 101-432 (YAGQVSIGTP…RYNPAAIGFA (332 aa)). D119 is an active-site residue. G121 lines the pepstatin A pocket. A disulfide bond links C132 and C137. Pepstatin A-binding residues include T161, G163, and S164. N266 carries an N-linked (GlcNAc...) asparagine glycan. Y286 provides a ligand contact to pepstatin A. Residue D317 is part of the active site. T320 and T321 together coordinate pepstatin A. An intrachain disulfide couples C357 to C391. The segment at 442-466 (AGNPSSSTTGGGTSGSNGGGSSSGA) is disordered. Positions 450 to 463 (TGGGTSGSNGGGSS) are enriched in gly residues. A propeptide spans 456–489 (GSNGGGSSSGAMERKGVQLGWLVGAVAVGVAAMI) (removed at pH 5.0; by autocatalysis).

This sequence belongs to the peptidase A1 family. As to quaternary structure, monomer. Activated by the autocatalytic cleavage of the propeptide. Cleaved at the end of the propeptide promiscuously from residue 76 to residue 79. C-terminal cleavage by autocatalysis at Gly-456 at the pH optimum indicating a possible regulatory or other function of this propeptide.

The protein resides in the secreted. Its activity is regulated as follows. Activated by low pH. Inhibited by pepstatin A with an IC(50) of 1.4 nM. Inhibited by acetyl pepstatin. Inhibited by HIV antiretroviral therapy protease inhibitors including amprenavir and ritonavir. Inhibited by HIV-1 protease inhibitor brecanavir with an approximate IC(50) of 352 nM. Inhibited by HIV-1 protease inhibitors CGP53437 and GS-8374. From the tested peptidomimetic inhibitor molecules, macrocycles containing P2-P3' tethered side chains, statines in P1 and an alpha amino acid in P2' are the best. From the linear peptidomimetic inhibitors, the ones with a phenylstatine or hydroxyethylamine scissile bond isoster are better than compounds with a reduced bond or a homo-amide. Overall, inhibitors with a phenylalanine side chain, either unsubstituted or with a small substituent, is preferred in P1 while a bulkier P1 side chain leads to lower inhibition. In terms of biological role, possesses prevalent extracellular endopeptidase activity at low pH condition. Required for high-density growth in acidic environments. Broad substrate specificity with preference cleavage of the peptide substrate between hydrophobic amino acids. Cleaves substrate at P1-P1' between Phe-Leu. Positively charged amino acids are preferred at P2. Prefers hydrophobic amino acids at the P3 and P4 positions. Cleaves substrate also at P1'-P2' between Leu-Val to some degree. Required for virulence in mouse inhalation model of infection. The polypeptide is Major aspartyl peptidase 1 (Cryptococcus neoformans var. grubii serotype A (strain H99 / ATCC 208821 / CBS 10515 / FGSC 9487) (Filobasidiella neoformans var. grubii)).